Here is a 217-residue protein sequence, read N- to C-terminus: Putative peroxiredoxin Q, chloroplastic (217 aa).

A chloroplast-targeting transit peptide spans 1 to 66; the sequence is MAFAVSTACR…PSTTGRNRIV (66 aa). The Thioredoxin domain occupies 70–217; sequence VSKGSAAPNF…GETLKILQSL (148 aa). Cys112 functions as the Cysteine sulfenic acid (-SOH) intermediate in the catalytic mechanism. Cys112 and Cys117 are joined by a disulfide.

This sequence belongs to the peroxiredoxin family. BCP/PrxQ subfamily. As to quaternary structure, monomer.

The protein resides in the plastid. It localises to the chloroplast thylakoid lumen. The catalysed reaction is a hydroperoxide + [thioredoxin]-dithiol = an alcohol + [thioredoxin]-disulfide + H2O. Functionally, thiol-specific peroxidase that catalyzes the reduction of hydrogen peroxide and organic hydroperoxides to water and alcohols, respectively. Plays a role in cell protection against oxidative stress by detoxifying peroxides. This is Putative peroxiredoxin Q, chloroplastic from Oryza sativa subsp. indica (Rice).